A 141-amino-acid polypeptide reads, in one-letter code: Small ribosomal subunit protein bS6 (141 aa).

Residues Val-96–Glu-141 form a disordered region. Residues Leu-103–Ser-124 are compositionally biased toward basic and acidic residues. Positions Ala-125–Glu-141 are enriched in acidic residues.

It belongs to the bacterial ribosomal protein bS6 family.

Binds together with bS18 to 16S ribosomal RNA. In Pseudomonas putida (strain ATCC 700007 / DSM 6899 / JCM 31910 / BCRC 17059 / LMG 24140 / F1), this protein is Small ribosomal subunit protein bS6.